The following is a 211-amino-acid chain: Small ribosomal subunit protein uS3 (211 aa).

In terms of domain architecture, KH type-2 spans 38 to 106 (LRNFLKKRLF…EIYLNIQEVR (69 aa)).

It belongs to the universal ribosomal protein uS3 family. In terms of assembly, part of the 30S ribosomal subunit. Forms a tight complex with proteins S10 and S14.

Its function is as follows. Binds the lower part of the 30S subunit head. Binds mRNA in the 70S ribosome, positioning it for translation. The polypeptide is Small ribosomal subunit protein uS3 (Geobacter metallireducens (strain ATCC 53774 / DSM 7210 / GS-15)).